Reading from the N-terminus, the 100-residue chain is UPF0235 protein NE0395 (100 aa).

It belongs to the UPF0235 family.

The polypeptide is UPF0235 protein NE0395 (Nitrosomonas europaea (strain ATCC 19718 / CIP 103999 / KCTC 2705 / NBRC 14298)).